Reading from the N-terminus, the 25-residue chain is ANIVGGIEYSINNASICSVGFSVTR.

The protein belongs to the peptidase S1 family.

It carries out the reaction Preferential cleavage: Ala-|-Xaa, Val-|-Xaa in bacterial cell walls, elastin and other proteins.. This Achromobacter lyticus protein is Alpha-lytic protease.